Here is a 270-residue protein sequence, read N- to C-terminus: Acetylglutamate kinase (270 aa).

Residues 41–42 (GG), Arg-63, and Asn-166 contribute to the substrate site.

Belongs to the acetylglutamate kinase family. ArgB subfamily.

The protein localises to the cytoplasm. It carries out the reaction N-acetyl-L-glutamate + ATP = N-acetyl-L-glutamyl 5-phosphate + ADP. It participates in amino-acid biosynthesis; L-arginine biosynthesis; N(2)-acetyl-L-ornithine from L-glutamate: step 2/4. Its function is as follows. Catalyzes the ATP-dependent phosphorylation of N-acetyl-L-glutamate. The sequence is that of Acetylglutamate kinase from Anaeromyxobacter dehalogenans (strain 2CP-C).